The primary structure comprises 76 residues: VpAmp1.0 (76 aa).

The signal sequence occupies residues 1–22; it reads MKLINLVPVFFVLIIVVDYCHS. I41 carries the isoleucine amide modification. Positions 42–76 are excised as a propeptide; that stretch reads GKRSVESQRYVDLNRRDLEQDLQELQDFLDQISEH.

It belongs to the non-disulfide-bridged peptide (NDBP) superfamily. Short antimicrobial peptide (group 4) family. Expressed by the venom gland.

The protein localises to the secreted. The protein resides in the target cell membrane. Its function is as follows. Antimicrobial peptide with potent activity against Gram-positive bacteria S.aureus (MIC=2.5 uM) and S.agalactiaea (MIC=2.5 uM), and Gram-negative bacteria E.coli (MIC=24 uM) and P.aeruginosa (MIC=2.5 uM), as well as against yeasts Candida albicans (MIC=6.25 uM) and C.glabrata (MIC&gt;50 uM). Also elicits high hemolysis on human erythrocytes (HC(50)=9.2 uM). The sequence is that of VpAmp1.0 from Mesomexovis punctatus (Scorpion).